The chain runs to 115 residues: uncharacterized protein (115 aa).

Residues 1-115 (MGVEISLDPP…ETVIKLSAAE (115 aa)) enclose the MSP domain.

This is an uncharacterized protein from Caenorhabditis elegans.